Consider the following 319-residue polypeptide: MKTRIVSSVTTTLLLGSILMNPVAGAADSDINIKTGTTDIGSNTTVKTGDLVTYDKENGMHKKVFYSFIDDKNHNKKLLVIRTKGTIAGQYRVYSEEGANKSGLAWPSAFKVQLQLPDNEVAQISDYYPRNSIDTKEYMSTLTYGFNGNVTGDDTGKIGGLIGANVSIGHTLKYVQPDFKTILESPTDKKVGWKVIFNNMVNQNWGPYDRDSWNPVYGNQLFMKTRNGSMKAADNFLDPNKASSLLSSGFSPDFATVITMDRKASKQQTNIDVIYERVRDDYQLHWTSTNWKGTNTKDKWTDRSSERYKIDWEKEEMTN.

The first 26 residues, 1-26 (MKTRIVSSVTTTLLLGSILMNPVAGA), serve as a signal peptide directing secretion.

This sequence belongs to the aerolysin family. In terms of assembly, self-assembles to first form a non-lytic oligomeric intermediate, and then, a mushroom-shaped homoheptamer structure of 100 Angstroms in length and up to 100 Angstroms in diameter. Interacts with human ADAM10; this interaction is required for toxin pore formation, disruption of focal adhesions, and hly-mediated cytotoxicity.

The protein resides in the secreted. Its function is as follows. Alpha-toxin binds to the membrane of eukaryotic cells (particularly red blood cells, RBC) forming pores, resulting in hemolysis, with the release of low-molecular weight molecules leading to eventual osmotic RBC lysis. Human RBCs bind much less alpha-toxin than do rabbit RBCs. Heptamer oligomerization and pore formation is required for lytic activity. The chain is Alpha-hemolysin (hly) from Staphylococcus aureus.